A 435-amino-acid polypeptide reads, in one-letter code: Cell adhesion molecule 2 (435 aa).

An N-terminal signal peptide occupies residues 1–24; that stretch reads MIWKRSAVLRFYSVCGLLLQGSQG. The Extracellular segment spans residues 25 to 367; the sequence is QFPLTQNVTV…ALAGQNGPDH (343 aa). Residues 27 to 119 form the Ig-like V-type domain; the sequence is PLTQNVTVVE…PVKTSKAYLT (93 aa). Residues N31 and N51 are each glycosylated (N-linked (GlcNAc...) asparagine). 3 disulfide bridges follow: C44–C104, C146–C203, and C248–C296. Ig-like C2-type domains are found at residues 127 to 219 and 227 to 312; these read PQIS…VAMQ and PSVK…YVLI. The N-linked (GlcNAc...) asparagine glycan is linked to N291. The helical transmembrane segment at 368 to 388 threads the bilayer; that stretch reads ALIGGIVAVVVFVTLCSIFLL. The Cytoplasmic segment spans residues 389-435; the sequence is GRYLARHKGTYLTNEAKGAEDAPDADTAIINAEGSQVNAEEKKEYFI. S423 is modified (phosphoserine).

This sequence belongs to the nectin family.

The protein localises to the cell membrane. Its subcellular location is the synapse. It localises to the cell projection. The protein resides in the axon. Adhesion molecule that engages in homo- and heterophilic interactions with the other nectin-like family members, leading to cell aggregation. Important for synapse organization, providing regulated trans-synaptic adhesion. Preferentially binds to oligodendrocytes. Its function is as follows. (Microbial infection) Induces cell fusion in neuron infected by a neuropathogenic strain of measles. Interacts with measles hemagglutinin to trigger hyperfusogenic F-mediated membrane fusion and presumably transsynaptic cell-to-cell transmission of the virus. The protein is Cell adhesion molecule 2 (CADM2) of Homo sapiens (Human).